The following is a 179-amino-acid chain: Large ribosomal subunit protein uL5 (179 aa).

It belongs to the universal ribosomal protein uL5 family. As to quaternary structure, part of the 50S ribosomal subunit; part of the 5S rRNA/L5/L18/L25 subcomplex. Contacts the 5S rRNA and the P site tRNA. Forms a bridge to the 30S subunit in the 70S ribosome.

Its function is as follows. This is one of the proteins that bind and probably mediate the attachment of the 5S RNA into the large ribosomal subunit, where it forms part of the central protuberance. In the 70S ribosome it contacts protein S13 of the 30S subunit (bridge B1b), connecting the 2 subunits; this bridge is implicated in subunit movement. Contacts the P site tRNA; the 5S rRNA and some of its associated proteins might help stabilize positioning of ribosome-bound tRNAs. The chain is Large ribosomal subunit protein uL5 from Prochlorococcus marinus (strain MIT 9215).